We begin with the raw amino-acid sequence, 385 residues long: MQPKDLAKKLFSEKFNRTSELNVYAPGRVNIIGEHTDYNDGFVMPCAINYGTAVSGAKRDDHTFCVYAADLDQFDRFRLDRPIEQNPSEKWTGYVRGVVKFIQERCPEFTQGADLVISGNVPLSSGLSSSASLEVAVGKFCQQLGELPLSNTDIALIGQKAENKFVGANCGNMDQLISALGQQDHLLMIDCRSLETKATPVPHNIAVMIVNSHVKHDLVTGEYNTRRQQCEAAAKFFGVKALRDVSIQQFKEKEAELTALDGEAAKRARHVVTENQRVLDAVDALNQGDISRLGELMGQSHDSMRDDFEITTPEIDYLVELAQQVIGKSGGARMTGGGFGGCIVAVAPVEKVEEVRKIIADNYQKRTGIKEDFYVCTASQGVHLC.

34 to 37 contributes to the substrate binding site; sequence EHTD. Residue 124–130 coordinates ATP; that stretch reads SSGLSSS. Positions 130 and 162 each coordinate Mg(2+). Catalysis depends on Asp-174, which acts as the Proton acceptor. Residue Tyr-223 participates in substrate binding.

It belongs to the GHMP kinase family. GalK subfamily.

The protein localises to the cytoplasm. The enzyme catalyses alpha-D-galactose + ATP = alpha-D-galactose 1-phosphate + ADP + H(+). It functions in the pathway carbohydrate metabolism; galactose metabolism. Catalyzes the transfer of the gamma-phosphate of ATP to D-galactose to form alpha-D-galactose-1-phosphate (Gal-1-P). This chain is Galactokinase, found in Mannheimia succiniciproducens (strain KCTC 0769BP / MBEL55E).